We begin with the raw amino-acid sequence, 179 residues long: MNTLLAVLMLAVAAQARPDAAGHVNIAEAVQQLNHTIVNAAHELHETLGLPTPDEALNLLTEQANAFKTKIAEVTTSLKQEAEKHQGSVAEQLNRFARNLNNSIHDAATSAQPADQLNSLQSALTNVGHQWQTSQPRPSVAQEAWAPVQSALQEAAEKTKEAAANLQNSIQSAVQKPAN.

An N-terminal signal peptide occupies residues 1 to 16; that stretch reads MNTLLAVLMLAVAAQA. Repeats lie at residues 30 to 40, 41 to 52, 53 to 60, 61 to 78, 79 to 89, 90 to 99, 100 to 113, 114 to 127, 128 to 140, 141 to 151, 152 to 165, and 166 to 179; these read VQQLNHTIVNA, AHELHETLGLPT, PDEALNLL, TEQA…TTSL, KQEAEKHQGSV, AEQLNRFARN, LNNS…SAQP, ADQL…LTNV, GHQW…RPSV, AQEAWAPVQSA, LQEA…AAAN, and LQNS…KPAN. Asn-34 is a glycosylation site (N-linked (GlcNAc...) asparagine). N-linked (GlcNAc...) asparagine glycosylation occurs at Asn-101. The interval 152-179 is disordered; the sequence is LQEAAEKTKEAAANLQNSIQSAVQKPAN. Residues 165–179 are compositionally biased toward polar residues; that stretch reads NLQNSIQSAVQKPAN.

Belongs to the insect apolipophorin-3 family. As to quaternary structure, equilibrium between a soluble monomer and a bound lipoprotein form. Apolipophorin-3 associates with lipophorin during lipid loading until each particle contains 14 molecules of apolipophorin-3 in L.migratoria (5 molecules of apolipophorin-3a and 9 of apolipophorin-3b). Hemolymph.

It localises to the secreted. Functionally, assists in the loading of diacylglycerol, generated from triacylglycerol stores in the fat body through the action of adipokinetic hormone, into lipophorin, the hemolymph lipoprotein. It increases the lipid carrying capacity of lipophorin by covering the expanding hydrophobic surface resulting from diacylglycerol uptake. It thus plays a critical role in the transport of lipids during flight in several species of insects. The chain is Apolipophorin-3b from Locusta migratoria (Migratory locust).